We begin with the raw amino-acid sequence, 165 residues long: Large ribosomal subunit protein uL30 (165 aa).

It belongs to the universal ribosomal protein uL30 family. As to quaternary structure, part of the 50S ribosomal subunit.

The chain is Large ribosomal subunit protein uL30 from Thermoplasma volcanium (strain ATCC 51530 / DSM 4299 / JCM 9571 / NBRC 15438 / GSS1).